Consider the following 678-residue polypeptide: MKKFQRPVSFQDLTVNFTQEEWQQLDPTQRLLYRDVMLENYSNLVSVGYHVSKPDVIFKLEQGEAPWIVEEFSNQNYPEVDDALEKNKEIQDKHLTQTVFFSNKTLITERENVFGKTLNLDMNSVPSRKMPYKCNPGGNSLKTNSEVIVAKKSKENRKIPDEYSGFGKHEKSHSGMNKYRCNPMRKASNQNENLILHQNIQILKQPFDYNKCRKTFFKRAILVTQKGRQTERKPNEPCECRKTFSKRSTLVVHQRIHTGEKPYVCNDCRKTFRVKTSLTRHQRIHTGERPYECSECGKTFIDKSALIVHQKIHGGEKSYECNECGKTFFRKSALAEHFRSHTGEKPYECKECGNAFSKKSYLVVHQRTHRGEKPNECKECGKTFFCQSALTAHQRIHTGEKPYECSECEKTFFCQSALNVHRRSHTGEKPYECSQCGKFLCTKSALIAHQITHRGKKSYECNECGKFFCHKSTLTIHQRTHTGEKHDVFNKCGRISIMKSNCSQCKRMNTKENFYECSEHGHAISKNSHLVVHQRTIWERPYECNECGRTYCRKSALTHHQRTHTGERPYECNECGKTFCQKFSFVEHQRTHTGEKPYERNECGKSFCHKSAFRVHRRIHTGEKPYECNQCGKTYRRLWTLTEHQKIHTGEKPYECNKCEKTFRHKSNFLLHQKSHKE.

Positions 8–79 constitute a KRAB domain; sequence VSFQDLTVNF…EEFSNQNYPE (72 aa). 14 C2H2-type zinc fingers span residues 235–257, 263–285, 291–313, 319–341, 347–369, 375–397, 403–425, 431–453, 459–481, 542–564, 570–592, 598–620, 626–648, and 654–676; these read NEPCECRKTFSKRSTLVVHQRIH, YVCNDCRKTFRVKTSLTRHQRIH, YECSECGKTFIDKSALIVHQKIH, YECNECGKTFFRKSALAEHFRSH, YECKECGNAFSKKSYLVVHQRTH, NECKECGKTFFCQSALTAHQRIH, YECSECEKTFFCQSALNVHRRSH, YECSQCGKFLCTKSALIAHQITH, YECNECGKFFCHKSTLTIHQRTH, YECNECGRTYCRKSALTHHQRTH, YECNECGKTFCQKFSFVEHQRTH, YERNECGKSFCHKSAFRVHRRIH, YECNQCGKTYRRLWTLTEHQKIH, and YECNKCEKTFRHKSNFLLHQKSH.

The protein belongs to the krueppel C2H2-type zinc-finger protein family.

Its subcellular location is the nucleus. Functionally, may be involved in transcriptional regulation. In Pongo abelii (Sumatran orangutan), this protein is Zinc finger protein 334 (ZNF334).